A 482-amino-acid polypeptide reads, in one-letter code: 3-isopropylmalate dehydratase large subunit (482 aa).

The interval A60–S79 is disordered. [4Fe-4S] cluster is bound by residues C353, C414, and C417.

Belongs to the aconitase/IPM isomerase family. LeuC type 1 subfamily. As to quaternary structure, heterodimer of LeuC and LeuD. Requires [4Fe-4S] cluster as cofactor.

It carries out the reaction (2R,3S)-3-isopropylmalate = (2S)-2-isopropylmalate. Its pathway is amino-acid biosynthesis; L-leucine biosynthesis; L-leucine from 3-methyl-2-oxobutanoate: step 2/4. Its function is as follows. Catalyzes the isomerization between 2-isopropylmalate and 3-isopropylmalate, via the formation of 2-isopropylmaleate. The polypeptide is 3-isopropylmalate dehydratase large subunit (Xanthomonas euvesicatoria pv. vesicatoria (strain 85-10) (Xanthomonas campestris pv. vesicatoria)).